We begin with the raw amino-acid sequence, 436 residues long: Trigger factor (436 aa).

Residues 161–246 (GDQVIVDFDG…VREVKEPTLP (86 aa)) enclose the PPIase FKBP-type domain.

The protein belongs to the FKBP-type PPIase family. Tig subfamily.

Its subcellular location is the cytoplasm. The enzyme catalyses [protein]-peptidylproline (omega=180) = [protein]-peptidylproline (omega=0). Functionally, involved in protein export. Acts as a chaperone by maintaining the newly synthesized protein in an open conformation. Functions as a peptidyl-prolyl cis-trans isomerase. The sequence is that of Trigger factor from Thioalkalivibrio sulfidiphilus (strain HL-EbGR7).